The chain runs to 455 residues: Exodeoxyribonuclease 7 large subunit (455 aa).

It belongs to the XseA family. As to quaternary structure, heterooligomer composed of large and small subunits.

It localises to the cytoplasm. It carries out the reaction Exonucleolytic cleavage in either 5'- to 3'- or 3'- to 5'-direction to yield nucleoside 5'-phosphates.. Functionally, bidirectionally degrades single-stranded DNA into large acid-insoluble oligonucleotides, which are then degraded further into small acid-soluble oligonucleotides. This Escherichia fergusonii (strain ATCC 35469 / DSM 13698 / CCUG 18766 / IAM 14443 / JCM 21226 / LMG 7866 / NBRC 102419 / NCTC 12128 / CDC 0568-73) protein is Exodeoxyribonuclease 7 large subunit.